Here is a 235-residue protein sequence, read N- to C-terminus: Uridylate kinase (235 aa).

Residue 9–12 (KLSG) coordinates ATP. Gly-51 provides a ligand contact to UMP. Residues Gly-52 and Arg-56 each coordinate ATP. Residues Asp-71 and 132–139 (TGNPYFTT) each bind UMP. Thr-159, Tyr-165, and Asp-168 together coordinate ATP.

Belongs to the UMP kinase family. Homohexamer.

Its subcellular location is the cytoplasm. The catalysed reaction is UMP + ATP = UDP + ADP. It participates in pyrimidine metabolism; CTP biosynthesis via de novo pathway; UDP from UMP (UMPK route): step 1/1. With respect to regulation, inhibited by UTP. Functionally, catalyzes the reversible phosphorylation of UMP to UDP. This is Uridylate kinase from Flavobacterium psychrophilum (strain ATCC 49511 / DSM 21280 / CIP 103535 / JIP02/86).